The sequence spans 124 residues: UPF0738 protein ABC2521 (124 aa).

This sequence belongs to the UPF0738 family.

The polypeptide is UPF0738 protein ABC2521 (Shouchella clausii (strain KSM-K16) (Alkalihalobacillus clausii)).